We begin with the raw amino-acid sequence, 435 residues long: Ras association domain-containing protein 9 (435 aa).

Residues 1 to 22 (MAPFGRNLLKTRHKNRSPTKDM) form a disordered region. The Ras-associating domain maps to 25-119 (EEKEIVVWVC…MQFVLVKTDA (95 aa)). Residues 195 to 291 (HTIHQQVQRM…KLSAEIEREV (97 aa)) are a coiled coil. Residues 371–423 (SKDGCQGKENRGKEAEASSSNGEIPPLTQRVFNTYTNDTDSDTGISSNHSQDS) are disordered. The span at 375–386 (CQGKENRGKEAE) shows a compositional bias: basic and acidic residues. The span at 400-423 (RVFNTYTNDTDSDTGISSNHSQDS) shows a compositional bias: polar residues.

Interacts with PAM. In terms of tissue distribution, testis, kidney, skeletal muscle, liver, lung, brain, heart, pituitary gland, adrenal gland and ovary.

It localises to the endosome. May play a role in regulating vesicuar trafficking in cells. The polypeptide is Ras association domain-containing protein 9 (Rassf9) (Rattus norvegicus (Rat)).